Here is a 320-residue protein sequence, read N- to C-terminus: uncharacterized protein (320 aa).

This is an uncharacterized protein from Bacillus subtilis (strain 168).